The sequence spans 344 residues: Dihydroorotase (344 aa).

His-13 and His-15 together coordinate Zn(2+). Substrate is bound by residues 15–17 (HLR) and Asn-41. Residues Lys-98, His-135, and His-173 each coordinate Zn(2+). Residue Lys-98 is modified to N6-carboxylysine. His-135 is a substrate binding site. Leu-218 contacts substrate. Asp-247 serves as a coordination point for Zn(2+). Residue Asp-247 is part of the active site. Substrate-binding residues include His-251 and Ala-263.

Belongs to the metallo-dependent hydrolases superfamily. DHOase family. Class II DHOase subfamily. As to quaternary structure, homodimer. The cofactor is Zn(2+).

It catalyses the reaction (S)-dihydroorotate + H2O = N-carbamoyl-L-aspartate + H(+). It functions in the pathway pyrimidine metabolism; UMP biosynthesis via de novo pathway; (S)-dihydroorotate from bicarbonate: step 3/3. In terms of biological role, catalyzes the reversible cyclization of carbamoyl aspartate to dihydroorotate. The sequence is that of Dihydroorotase from Neisseria meningitidis serogroup C / serotype 2a (strain ATCC 700532 / DSM 15464 / FAM18).